A 407-amino-acid polypeptide reads, in one-letter code: Proteasomal ubiquitin receptor ADRM1 (407 aa).

Residue threonine 2 is modified to N-acetylthreonine. Serine 15 is subject to Phosphoserine. The 114-residue stretch at 18–131 folds into the Pru domain; the sequence is ASNKYLVEFR…RKVNEYLNNP (114 aa). A Glycyl lysine isopeptide (Lys-Gly) (interchain with G-Cter in ubiquitin) cross-link involves residue lysine 34. Tyrosine 127 bears the Phosphotyrosine mark. A phosphoserine mark is found at serine 140 and serine 211. Disordered stretches follow at residues 194–259 and 379–407; these read LLGS…ASPT and KAMQNNAKPEQKEGDTKDKKDEEEDMSLD. The residue at position 217 (threonine 217) is a Phosphothreonine. Residues 253–407 form an interaction with UCHL5 region; sequence STAASPTQPI…KDEEEDMSLD (155 aa). Residues 277–391 form the DEUBAD domain; the sequence is PAGPAGGQQV…QNNAKPEQKE (115 aa). Over residues 387–398 the composition is skewed to basic and acidic residues; the sequence is PEQKEGDTKDKK. Serine 405 carries the post-translational modification Phosphoserine.

This sequence belongs to the ADRM1 family. In terms of assembly, component of the 19S proteasome regulatory particle complex. The 26S proteasome consists of a 20S core particle (CP) and two 19S regulatory subunits (RP). Interacts with the proteasomal scaffolding protein PSMD1. Interacts with deubiquitinase UCHL5; this interaction activates the auto-inhibited UCHL5 by deoligomerizing it. Interacts with UBQLN2 and ubiquitin. Ubiquitinated by UBE3C in response to proteotoxic stress.

It is found in the cytoplasm. Its subcellular location is the nucleus. Component of the 26S proteasome, a multiprotein complex involved in the ATP-dependent degradation of ubiquitinated proteins. This complex plays a key role in the maintenance of protein homeostasis by removing misfolded or damaged proteins, which could impair cellular functions, and by removing proteins whose functions are no longer required. Therefore, the proteasome participates in numerous cellular processes, including cell cycle progression, apoptosis, or DNA damage repair. Within the complex, functions as a proteasomal ubiquitin receptor. Engages and activates 19S-associated deubiquitinases UCHL5 and PSMD14 during protein degradation. UCHL5 reversibly associate with the 19S regulatory particle whereas PSMD14 is an intrinsic subunit of the proteasome lid subcomplex. This Homo sapiens (Human) protein is Proteasomal ubiquitin receptor ADRM1 (ADRM1).